A 388-amino-acid polypeptide reads, in one-letter code: Lipid-A-disaccharide synthase (388 aa).

This sequence belongs to the LpxB family.

It carries out the reaction a lipid X + a UDP-2-N,3-O-bis[(3R)-3-hydroxyacyl]-alpha-D-glucosamine = a lipid A disaccharide + UDP + H(+). It participates in bacterial outer membrane biogenesis; LPS lipid A biosynthesis. In terms of biological role, condensation of UDP-2,3-diacylglucosamine and 2,3-diacylglucosamine-1-phosphate to form lipid A disaccharide, a precursor of lipid A, a phosphorylated glycolipid that anchors the lipopolysaccharide to the outer membrane of the cell. This chain is Lipid-A-disaccharide synthase, found in Burkholderia pseudomallei (strain K96243).